A 230-amino-acid chain; its full sequence is 5'-methylthioadenosine/S-adenosylhomocysteine nucleosidase (230 aa).

Glu-12 acts as the Proton acceptor in catalysis. Substrate-binding positions include Gly-78, Ile-153, and 174-175; that span reads ME. Asp-198 serves as the catalytic Proton donor.

It belongs to the PNP/UDP phosphorylase family. MtnN subfamily.

The enzyme catalyses S-adenosyl-L-homocysteine + H2O = S-(5-deoxy-D-ribos-5-yl)-L-homocysteine + adenine. It catalyses the reaction S-methyl-5'-thioadenosine + H2O = 5-(methylsulfanyl)-D-ribose + adenine. The catalysed reaction is 5'-deoxyadenosine + H2O = 5-deoxy-D-ribose + adenine. The protein operates within amino-acid biosynthesis; L-methionine biosynthesis via salvage pathway; S-methyl-5-thio-alpha-D-ribose 1-phosphate from S-methyl-5'-thioadenosine (hydrolase route): step 1/2. Its function is as follows. Catalyzes the irreversible cleavage of the glycosidic bond in both 5'-methylthioadenosine (MTA) and S-adenosylhomocysteine (SAH/AdoHcy) to adenine and the corresponding thioribose, 5'-methylthioribose and S-ribosylhomocysteine, respectively. Also cleaves 5'-deoxyadenosine, a toxic by-product of radical S-adenosylmethionine (SAM) enzymes, into 5-deoxyribose and adenine. The protein is 5'-methylthioadenosine/S-adenosylhomocysteine nucleosidase of Shewanella denitrificans (strain OS217 / ATCC BAA-1090 / DSM 15013).